The sequence spans 594 residues: U3 small nucleolar RNA-associated protein 18 (594 aa).

Disordered stretches follow at residues 48–128 and 176–200; these read EQEM…WIDS and KWVD…SNNV. 3 stretches are compositionally biased toward acidic residues: residues 49–72, 102–128, and 180–196; these read QEMD…DEAQ, TMDV…WIDS, and DESD…EEEG. The tract at residues 101–190 is interaction with UTP21; that stretch reads DTMDVDDEDD…ESDSELDDEE (90 aa). A phosphoserine mark is found at Ser-182 and Ser-184. 5 WD repeats span residues 246-285, 290-334, 463-504, 513-554, and 560-593; these read PSHS…NHLV, LVGS…LTHS, GTTT…TSST, QLTT…VFSN, and TPLG…KLNH.

The protein belongs to the WD repeat UTP18 family. In terms of assembly, interacts with snoRNA U3. Interacts with MPP10, UTP21 and UTP25. Component of the ribosomal small subunit (SSU) processome composed of at least 40 protein subunits and snoRNA U3.

The protein localises to the nucleus. It localises to the nucleolus. Functionally, involved in nucleolar processing of pre-18S ribosomal RNA and ribosome assembly. The chain is U3 small nucleolar RNA-associated protein 18 (UTP18) from Saccharomyces cerevisiae (strain ATCC 204508 / S288c) (Baker's yeast).